The primary structure comprises 159 residues: Transcriptional repressor NrdR (159 aa).

A zinc finger lies at 3-34 (CPFCHTPDTSVIDSRVSEEGDRIRRRRRCPHC). Residues 49–139 (PQVVKQDGNR…VYRSFQGAAD (91 aa)) enclose the ATP-cone domain.

This sequence belongs to the NrdR family. It depends on Zn(2+) as a cofactor.

Functionally, negatively regulates transcription of bacterial ribonucleotide reductase nrd genes and operons by binding to NrdR-boxes. The protein is Transcriptional repressor NrdR of Nitrosospira multiformis (strain ATCC 25196 / NCIMB 11849 / C 71).